A 304-amino-acid polypeptide reads, in one-letter code: Acetyl-coenzyme A carboxylase carboxyl transferase subunit beta (304 aa).

The tract at residues 16-42 is disordered; it reads SSLPPKNSEGGLAYFDEPSPEQESTRK. Residues 48–304 enclose the CoA carboxyltransferase N-terminal domain; the sequence is LWVKCPKCGE…LLRYHQEGAV (257 aa). Zn(2+) is bound by residues C52, C55, C71, and C74. The segment at 52-74 adopts a C4-type zinc-finger fold; that stretch reads CPKCGEALFNKDLVENQRVCLTC.

The protein belongs to the AccD/PCCB family. Acetyl-CoA carboxylase is a heterohexamer composed of biotin carboxyl carrier protein (AccB), biotin carboxylase (AccC) and two subunits each of ACCase subunit alpha (AccA) and ACCase subunit beta (AccD). Zn(2+) is required as a cofactor.

It is found in the cytoplasm. The enzyme catalyses N(6)-carboxybiotinyl-L-lysyl-[protein] + acetyl-CoA = N(6)-biotinyl-L-lysyl-[protein] + malonyl-CoA. Its pathway is lipid metabolism; malonyl-CoA biosynthesis; malonyl-CoA from acetyl-CoA: step 1/1. Its function is as follows. Component of the acetyl coenzyme A carboxylase (ACC) complex. Biotin carboxylase (BC) catalyzes the carboxylation of biotin on its carrier protein (BCCP) and then the CO(2) group is transferred by the transcarboxylase to acetyl-CoA to form malonyl-CoA. This is Acetyl-coenzyme A carboxylase carboxyl transferase subunit beta from Desulfitobacterium hafniense (strain Y51).